A 1159-amino-acid polypeptide reads, in one-letter code: WASH complex subunit 5 (1159 aa).

S917 carries the post-translational modification Phosphoserine.

Belongs to the strumpellin family. As to quaternary structure, component of the WASH core complex also described as WASH regulatory complex (SHRC) composed of WASH (WASHC1, WASH2P or WASH3P), WASHC2 (WASHC2A or WASHC2C), WASHC3, WASHC4 and WASHC5. The WASH core complex associates via WASHC2 with the F-actin-capping protein dimer (formed by CAPZA1, CAPZA2 or CAPZA3 and CAPZB) in a transient or substoichiometric manner which was initially described as WASH complex. Interacts with VCP, PI4K2A. As to expression, expressed ubiquitously.

It is found in the cytoplasm. The protein resides in the cytosol. The protein localises to the endoplasmic reticulum. Its subcellular location is the early endosome. In terms of biological role, acts as a component of the WASH core complex that functions as a nucleation-promoting factor (NPF) at the surface of endosomes, where it recruits and activates the Arp2/3 complex to induce actin polymerization, playing a key role in the fission of tubules that serve as transport intermediates during endosome sorting. May be involved in axonal outgrowth. Involved in cellular localization of ADRB2. Involved in cellular trafficking of BLOC-1 complex cargos such as ATP7A and VAMP7. The chain is WASH complex subunit 5 from Homo sapiens (Human).